A 146-amino-acid chain; its full sequence is Calmodulin-like protein 5 (146 aa).

Alanine 2 carries the post-translational modification N-acetylalanine. EF-hand domains lie at 8–43 (EEEAQYKKAFSAVDTDGNGTINAQELGAALKATGKN), 44–74 (LSEAQLRKLISEVDSDGDGEISFQEFLTAAK), 78–113 (AGLEDLQVAFRAFDQDGDGHITVDELRRAMAGLGQP), and 114–146 (LPQEELDAMIREADVDQDGRVNYEEFARMLAQE). 20 residues coordinate Ca(2+): aspartate 21, aspartate 23, asparagine 25, threonine 27, glutamate 32, aspartate 57, aspartate 59, aspartate 61, glutamate 63, glutamate 68, aspartate 91, aspartate 93, aspartate 95, histidine 97, glutamate 102, aspartate 127, aspartate 129, aspartate 131, arginine 133, and glutamate 138.

Associates with transglutaminase 3. As to expression, particularly abundant in the epidermis where its expression is directly related to keratinocyte differentiation. Very low expression in lung.

In terms of biological role, binds calcium. May be involved in terminal differentiation of keratinocytes. The chain is Calmodulin-like protein 5 (CALML5) from Homo sapiens (Human).